Reading from the N-terminus, the 210-residue chain is Nucleoside triphosphate pyrophosphatase (210 aa).

Asp-79 functions as the Proton acceptor in the catalytic mechanism.

Belongs to the Maf family. A divalent metal cation serves as cofactor.

The protein resides in the cytoplasm. The enzyme catalyses a ribonucleoside 5'-triphosphate + H2O = a ribonucleoside 5'-phosphate + diphosphate + H(+). It carries out the reaction a 2'-deoxyribonucleoside 5'-triphosphate + H2O = a 2'-deoxyribonucleoside 5'-phosphate + diphosphate + H(+). Functionally, nucleoside triphosphate pyrophosphatase. May have a dual role in cell division arrest and in preventing the incorporation of modified nucleotides into cellular nucleic acids. The polypeptide is Nucleoside triphosphate pyrophosphatase (Mycolicibacterium paratuberculosis (strain ATCC BAA-968 / K-10) (Mycobacterium paratuberculosis)).